Consider the following 458-residue polypeptide: ATP synthase subunit beta (458 aa).

147-154 (GGAGVGKT) lines the ATP pocket.

Belongs to the ATPase alpha/beta chains family. As to quaternary structure, F-type ATPases have 2 components, CF(1) - the catalytic core - and CF(0) - the membrane proton channel. CF(1) has five subunits: alpha(3), beta(3), gamma(1), delta(1), epsilon(1). CF(0) has three main subunits: a(1), b(2) and c(9-12). The alpha and beta chains form an alternating ring which encloses part of the gamma chain. CF(1) is attached to CF(0) by a central stalk formed by the gamma and epsilon chains, while a peripheral stalk is formed by the delta and b chains.

It is found in the cell inner membrane. It carries out the reaction ATP + H2O + 4 H(+)(in) = ADP + phosphate + 5 H(+)(out). Produces ATP from ADP in the presence of a proton gradient across the membrane. The catalytic sites are hosted primarily by the beta subunits. In Chromohalobacter salexigens (strain ATCC BAA-138 / DSM 3043 / CIP 106854 / NCIMB 13768 / 1H11), this protein is ATP synthase subunit beta.